The primary structure comprises 630 residues: Chaperone protein HtpG (630 aa).

Residues 1 to 339 (MSHTETHAFQ…SNDLPLNVSR (339 aa)) are a; substrate-binding. The tract at residues 340–556 (EILQSNRVVD…EGDISAHMAR (217 aa)) is b. The interval 557-630 (MMEQMGQAMP…RMNALLSEVI (74 aa)) is c.

Belongs to the heat shock protein 90 family. In terms of assembly, homodimer.

Its subcellular location is the cytoplasm. Its function is as follows. Molecular chaperone. Has ATPase activity. In Hydrogenovibrio crunogenus (strain DSM 25203 / XCL-2) (Thiomicrospira crunogena), this protein is Chaperone protein HtpG.